The sequence spans 138 residues: NADH dehydrogenase [ubiquinone] iron-sulfur protein 2, mitochondrial (138 aa).

Belongs to the complex I 49 kDa subunit family. As to quaternary structure, core subunit of respiratory chain NADH dehydrogenase (Complex I) which is composed of 45 different subunits. Component of the iron-sulfur (IP) fragment of the enzyme. Interacts with NDUFAF3. Interacts with NDUFAF7. Interacts with CERS2. The cofactor is [4Fe-4S] cluster. Post-translationally, dimethylation at Arg-118 by NDUFAF7 takes place after NDUFS2 assembles into the complex I, leading to stabilize the early intermediate complex.

The protein localises to the mitochondrion inner membrane. It catalyses the reaction a ubiquinone + NADH + 5 H(+)(in) = a ubiquinol + NAD(+) + 4 H(+)(out). In terms of biological role, core subunit of the mitochondrial membrane respiratory chain NADH dehydrogenase (Complex I) which catalyzes electron transfer from NADH through the respiratory chain, using ubiquinone as an electron acceptor. Essential for the catalytic activity and assembly of complex I. Redox-sensitive, critical component of the oxygen-sensing pathway in the pulmonary vasculature which plays a key role in acute pulmonary oxygen-sensing and hypoxic pulmonary vasoconstriction. Plays an important role in carotid body sensing of hypoxia. Essential for glia-like neural stem and progenitor cell proliferation, differentiation and subsequent oligodendrocyte or neuronal maturation. The protein is NADH dehydrogenase [ubiquinone] iron-sulfur protein 2, mitochondrial of Mesocricetus auratus (Golden hamster).